The primary structure comprises 348 residues: Mitogen-activated protein kinase 14B (348 aa).

Residues Y25–F309 form the Protein kinase domain. ATP-binding positions include V31–V39 and K54. The active-site Proton acceptor is D169. T181 carries the post-translational modification Phosphothreonine; by MAP2K3. Positions T181–Y183 match the TXY motif. At Y183 the chain carries Phosphotyrosine; by MAP2K3.

The protein belongs to the protein kinase superfamily. CMGC Ser/Thr protein kinase family. MAP kinase subfamily. The cofactor is Mg(2+). Post-translationally, dually phosphorylated on Thr-181 and Tyr-183, which activates the enzyme.

It localises to the cytoplasm. The protein localises to the nucleus. It catalyses the reaction L-seryl-[protein] + ATP = O-phospho-L-seryl-[protein] + ADP + H(+). The catalysed reaction is L-threonyl-[protein] + ATP = O-phospho-L-threonyl-[protein] + ADP + H(+). Activated by threonine and tyrosine phosphorylation by the dual specificity kinase, MKK3. Serine/threonine kinase which acts as an essential component of the MAP kinase signal transduction pathway. Mapk14b is one of the four p38 MAPKs which play an important role in the cascades of cellular responses evoked by extracellular stimuli such as pro-inflammatory cytokines or physical stress leading to direct activation of transcription factors. Accordingly, p38 MAPKs phosphorylate a broad range of proteins and it has been estimated that they may have approximately 200 to 300 substrates each. Some of the targets are downstream kinases which are activated through phosphorylation and further phosphorylate additional targets. This chain is Mitogen-activated protein kinase 14B (mapk14b), found in Danio rerio (Zebrafish).